A 783-amino-acid polypeptide reads, in one-letter code: BMP/retinoic acid-inducible neural-specific protein 2 (783 aa).

The signal sequence occupies residues 1–33; the sequence is MRWQCGTRFRGLRPAVAPWTALLALGLPGWVLA. One can recognise an MACPF domain in the interval 85–281; the sequence is RYRIYREFAR…FVAAALSYIT (197 aa). N-linked (GlcNAc...) asparagine glycosylation is found at Asn185, Asn354, Asn473, Asn579, Asn626, and Asn658.

Belongs to the BRINP family.

It localises to the secreted. Inhibits neuronal cell proliferation by negative regulation of the cell cycle transition. The chain is BMP/retinoic acid-inducible neural-specific protein 2 (BRINP2) from Homo sapiens (Human).